Here is a 355-residue protein sequence, read N- to C-terminus: 3-dehydroquinate synthase (355 aa).

Residues 98 to 102 (GVVGD), 122 to 123 (TT), lysine 135, lysine 144, and 162 to 165 (TLDT) each bind NAD(+). Residues glutamate 177, histidine 240, and histidine 257 each coordinate Zn(2+).

This sequence belongs to the sugar phosphate cyclases superfamily. Dehydroquinate synthase family. Co(2+) is required as a cofactor. Zn(2+) serves as cofactor. The cofactor is NAD(+).

Its subcellular location is the cytoplasm. It catalyses the reaction 7-phospho-2-dehydro-3-deoxy-D-arabino-heptonate = 3-dehydroquinate + phosphate. Its pathway is metabolic intermediate biosynthesis; chorismate biosynthesis; chorismate from D-erythrose 4-phosphate and phosphoenolpyruvate: step 2/7. Its function is as follows. Catalyzes the conversion of 3-deoxy-D-arabino-heptulosonate 7-phosphate (DAHP) to dehydroquinate (DHQ). The chain is 3-dehydroquinate synthase from Dictyoglomus turgidum (strain DSM 6724 / Z-1310).